The primary structure comprises 186 residues: RNA polymerase sigma factor NccH (186 aa).

The Polymerase core binding signature appears at 49-62 (DIVQDTFIAAWHAL). Residues 152-171 (HPEAAMALGTSAKAVESRVA) constitute a DNA-binding region (H-T-H motif).

It belongs to the sigma-70 factor family. ECF subfamily.

In terms of biological role, sigma factors are initiation factors that promote the attachment of RNA polymerase to specific initiation sites and are then released. This sigma factor regulates the genes for a membrane-located efflux system that confers resistance to nickel, cobalt and cadmium. The chain is RNA polymerase sigma factor NccH (nccH) from Alcaligenes xylosoxydans xylosoxydans (Achromobacter xylosoxidans).